A 362-amino-acid polypeptide reads, in one-letter code: Aspartate-semialdehyde dehydrogenase (362 aa).

Residues threonine 15, glycine 16, alanine 17, valine 18, serine 40, serine 43, leucine 87, and aspartate 88 each coordinate NADP(+). Cysteine 154 serves as the catalytic Acyl-thioester intermediate. Glycine 186 is a binding site for NADP(+). Histidine 251 functions as the Proton acceptor in the catalytic mechanism. Asparagine 340 contributes to the NADP(+) binding site.

This sequence belongs to the aspartate-semialdehyde dehydrogenase family. In terms of assembly, homotetramer; dimer of dimers.

The protein localises to the cytoplasm. It is found in the cytosol. Its subcellular location is the nucleus. It catalyses the reaction L-aspartate 4-semialdehyde + phosphate + NADP(+) = 4-phospho-L-aspartate + NADPH + H(+). It functions in the pathway amino-acid biosynthesis; L-methionine biosynthesis via de novo pathway; L-homoserine from L-aspartate: step 2/3. The protein operates within amino-acid biosynthesis; L-threonine biosynthesis; L-threonine from L-aspartate: step 2/5. In terms of biological role, catalyzes the NADPH-dependent formation of L-aspartate 4-semialdehyde (L-ASA) by the reductive dephosphorylation of 4-phospho-L-aspartate. Mediates the second step in the biosynthesis of amino acids that derive from aspartate (the aspartate family of amino acids), including methioinine and threonine, the latter of which is a precursor to isoleucine. The polypeptide is Aspartate-semialdehyde dehydrogenase (Trichophyton rubrum (strain ATCC MYA-4607 / CBS 118892) (Athlete's foot fungus)).